The following is a 175-amino-acid chain: Major MR/P fimbria protein (175 aa).

The signal sequence occupies residues 1-23 (MKLNKLALVLGLGLSVVAGSALA). The cysteines at positions 42 and 81 are disulfide-linked.

Belongs to the fimbrial protein family.

The protein resides in the fimbrium. Its function is as follows. Major structural component of mannose-resistant/proteus-like fimbriae of P.mirabilis. The polypeptide is Major MR/P fimbria protein (mrpA) (Proteus mirabilis (strain HI4320)).